A 347-amino-acid polypeptide reads, in one-letter code: Leucine-rich repeat-containing protein 69 (347 aa).

9 LRR repeats span residues 15 to 37 (NTKILTLNGKRITKMPSTLEKLP), 38 to 60 (NLKTLDLQNNSISKVCPELRTLT), 61 to 82 (QLTLLNLGNNHLQEVPEEIKYL), 84 to 105 (SLKNLHLFGNRICRIAPGVFNG), 108 to 129 (RLIMLNLNDNRLTSLPQEIGRL), 131 to 152 (SLTYLSLNRNNLTVIPKELCSL), 154 to 175 (HLSELHLNYNQIVYIPEEIKFL), 177 to 198 (NLQQLFLVRNNIEELPEEICHL), and 200 to 222 (KLRVLDIAGNVIQIFPAGFQNLR).

It belongs to the LRRC69 family.

The sequence is that of Leucine-rich repeat-containing protein 69 (Lrrc69) from Mus musculus (Mouse).